The chain runs to 128 residues: Small ribosomal subunit protein uS13 (128 aa).

The interval 85 to 128 is disordered; it reads GSYRGLRHRRSLPVRGQRTHTNARTRKGPRRGTVANKKKATGKT. Over residues 89 to 128 the composition is skewed to basic residues; that stretch reads GLRHRRSLPVRGQRTHTNARTRKGPRRGTVANKKKATGKT.

Belongs to the universal ribosomal protein uS13 family. In terms of assembly, part of the 30S ribosomal subunit. Forms a loose heterodimer with protein S19. Forms two bridges to the 50S subunit in the 70S ribosome.

Located at the top of the head of the 30S subunit, it contacts several helices of the 16S rRNA. In the 70S ribosome it contacts the 23S rRNA (bridge B1a) and protein L5 of the 50S subunit (bridge B1b), connecting the 2 subunits; these bridges are implicated in subunit movement. Contacts the tRNAs in the A and P-sites. In Solibacter usitatus (strain Ellin6076), this protein is Small ribosomal subunit protein uS13.